The chain runs to 120 residues: Putative B3 domain-containing protein At3g28853 (120 aa).

Residues 19–120 constitute a DNA-binding region (TF-B3); sequence INKRLTQSDV…DKSNEVFYII (102 aa).

The protein localises to the nucleus. This Arabidopsis thaliana (Mouse-ear cress) protein is Putative B3 domain-containing protein At3g28853.